The primary structure comprises 226 residues: Small ribosomal subunit protein uS3 (226 aa).

Residues 39–107 (IRAYIKKNVV…EVTLNIKEVK (69 aa)) enclose the KH type-2 domain.

This sequence belongs to the universal ribosomal protein uS3 family. In terms of assembly, part of the 30S ribosomal subunit. Forms a tight complex with proteins S10 and S14.

Its function is as follows. Binds the lower part of the 30S subunit head. Binds mRNA in the 70S ribosome, positioning it for translation. This Pelagibacter ubique (strain HTCC1062) protein is Small ribosomal subunit protein uS3.